Reading from the N-terminus, the 409-residue chain is uncharacterized protein (409 aa).

The N-acetyltransferase domain occupies 3–162 (TDVRVLRQDD…DDVRLRYAVP (160 aa)). Acetyl-CoA is bound by residues 82-84 (VSV), 90-95 (RRGVLT), and 118-119 (SE). The active-site Proton donor is the Tyr-123. Phe-409 (proton acceptor; via carboxylate) is an active-site residue.

Belongs to the acetyltransferase Eis family. In terms of assembly, homohexamer; trimer of dimers.

This is an uncharacterized protein from Streptomyces avermitilis (strain ATCC 31267 / DSM 46492 / JCM 5070 / NBRC 14893 / NCIMB 12804 / NRRL 8165 / MA-4680).